Consider the following 172-residue polypeptide: MKLGIVIFPSKMIQDKANGLRKRYDPHYALVPPHITLKTPFETQDEQLESIVNELHTIASKTNPFALHVGKVGSFAPVNNVLYFKVEKTPELTFLNEEMHSGFFTQEREYAFVPHLTIGQGLSDAEHADVLGRLRMKDFYYEQPIDRFHLLYQLENGTWTVHETFRLGKGNN.

Residue His-34 is the Proton donor of the active site. 2 consecutive short sequence motifs (HXTX) follow at residues 34–37 (HITL) and 115–118 (HLTI). The active-site Proton acceptor is His-115.

This sequence belongs to the 2H phosphoesterase superfamily. YjcG family.

This Bacillus cereus (strain ATCC 10987 / NRS 248) protein is Putative phosphoesterase BCE_1348.